Here is a 134-residue protein sequence, read N- to C-terminus: Photosystem II assembly factor lipoprotein Psb27 (134 aa).

Positions 1–21 (MKRFWAMVCALFLSVSLLLTS) are cleaved as a signal peptide. Cys-22 carries the N-palmitoyl cysteine lipid modification. Cys-22 carries the S-diacylglycerol cysteine lipid modification.

This sequence belongs to the Psb27 family. Part of a photosystem II (PSII) assembly intermediate complex PSII-I; crystallized from a strain deleted of psbJ, it forms monomeric PSII before addition of the oxygen evolving complex. PSII-I includes 3 assembly factors not found in mature PSII (Psb27, Psb28 and Psb34). Binds to the lumenal side of PSII, adjacent to the CP43 (psbC) subunit.

It is found in the cellular thylakoid membrane. Its function is as follows. Plays a role in the repair and/or biogenesis of the calcium-manganese-oxide cluster on the lumenal face of the thylakoid membrane. Its presence in a photosystem II (PSII) preparation prevents binding of other extrinsic subunits PsbO, PsbU and PsbV, and thus assembly of calcium-manganese-oxide cluster. Psb27-containing complexes lack oxygen evolving activity and an oxidizable calcium-manganese-oxide cluster, but have a normal reaction center. In Thermosynechococcus vestitus (strain NIES-2133 / IAM M-273 / BP-1), this protein is Photosystem II assembly factor lipoprotein Psb27.